A 512-amino-acid polypeptide reads, in one-letter code: Cobyric acid synthase (512 aa).

The GATase cobBQ-type domain occupies Ala251–Phe451. Cys332 serves as the catalytic Nucleophile. The active site involves His443.

This sequence belongs to the CobB/CobQ family. CobQ subfamily.

It participates in cofactor biosynthesis; adenosylcobalamin biosynthesis. Its function is as follows. Catalyzes amidations at positions B, D, E, and G on adenosylcobyrinic A,C-diamide. NH(2) groups are provided by glutamine, and one molecule of ATP is hydrogenolyzed for each amidation. The chain is Cobyric acid synthase from Yersinia enterocolitica serotype O:8 / biotype 1B (strain NCTC 13174 / 8081).